The following is a 310-amino-acid chain: UDP-N-acetylenolpyruvoylglucosamine reductase (310 aa).

The 166-residue stretch at 23 to 188 (KVGGNAEIFF…LKAVFKVNKG (166 aa)) folds into the FAD-binding PCMH-type domain. The active site involves R168. The active-site Proton donor is S217. E287 is an active-site residue.

Belongs to the MurB family. FAD is required as a cofactor.

The protein localises to the cytoplasm. It catalyses the reaction UDP-N-acetyl-alpha-D-muramate + NADP(+) = UDP-N-acetyl-3-O-(1-carboxyvinyl)-alpha-D-glucosamine + NADPH + H(+). It functions in the pathway cell wall biogenesis; peptidoglycan biosynthesis. Its function is as follows. Cell wall formation. The polypeptide is UDP-N-acetylenolpyruvoylglucosamine reductase (Rickettsia bellii (strain OSU 85-389)).